A 534-amino-acid chain; its full sequence is uncharacterized protein (534 aa).

2 helical membrane passes run 149 to 169 (ILTTLVTVGTTLGTPIFSITI) and 185 to 205 (VFLVIFSVFAIALGLVSSLIF).

Its subcellular location is the cell membrane. This is an uncharacterized protein from Mycoplasma pneumoniae (strain ATCC 29342 / M129 / Subtype 1) (Mycoplasmoides pneumoniae).